Here is a 225-residue protein sequence, read N- to C-terminus: Redox-sensing transcriptional repressor Rex (225 aa).

The segment at residues 16 to 55 is a DNA-binding region (H-T-H motif); sequence IYYRYLNILLDADKKRVSSTELSEAVKVDSATIRRDFSYF. 90–95 lines the NAD(+) pocket; that stretch reads GVGNLG.

It belongs to the transcriptional regulatory Rex family. As to quaternary structure, homodimer.

It localises to the cytoplasm. Functionally, modulates transcription in response to changes in cellular NADH/NAD(+) redox state. The polypeptide is Redox-sensing transcriptional repressor Rex (Lactiplantibacillus plantarum (strain ATCC BAA-793 / NCIMB 8826 / WCFS1) (Lactobacillus plantarum)).